We begin with the raw amino-acid sequence, 180 residues long: Adenine phosphoribosyltransferase (180 aa).

N-acetylalanine is present on Ala-2. Residues Ser-4, Ser-15, and Ser-30 each carry the phosphoserine modification. Tyr-60 bears the Phosphotyrosine mark. Residue Ser-66 is modified to Phosphoserine. Lys-114 bears the N6-acetyllysine mark. Thr-135 carries the phosphothreonine modification.

Belongs to the purine/pyrimidine phosphoribosyltransferase family. In terms of assembly, homodimer.

The protein localises to the cytoplasm. It carries out the reaction AMP + diphosphate = 5-phospho-alpha-D-ribose 1-diphosphate + adenine. It participates in purine metabolism; AMP biosynthesis via salvage pathway; AMP from adenine: step 1/1. Its function is as follows. Catalyzes a salvage reaction resulting in the formation of AMP, that is energically less costly than de novo synthesis. This is Adenine phosphoribosyltransferase from Homo sapiens (Human).